A 342-amino-acid chain; its full sequence is MTKSLFRQSFLFDSLDLDHPMVAQTVRTEQGVTLKLHQRGVLEVIPAQTDAATKNMVISCGIHGDETAPMELLDKWIDDIVSGFQPVAERCLFIMAHPQATVRHVRFIEQNLNRLFDDKPHTPSTELAIADNLKVLLRQFFANTDEHSRWHLDLHCAIRGSKHYSFAVSPKARHPVRSRSLMQFIEQAHIEAVMLSNAPSSTFSWYSAEHYAAQALTLELGQVARLGENLLDRLLAFDLAMRDLISRHKPEHLPRKSVMYRVSRTIVRLHDDFDFRFSDDVENFTAFMHGEVFGHDGDKPLMAKNEGEAIVFPNRKVAIGQRAALMVCKVNTRYEDDQLVYD.

Zn(2+) is bound by residues H63, E66, and H155. The active site involves E219.

Belongs to the AspA/AstE family. Succinylglutamate desuccinylase subfamily. It depends on Zn(2+) as a cofactor.

It catalyses the reaction N-succinyl-L-glutamate + H2O = L-glutamate + succinate. Its pathway is amino-acid degradation; L-arginine degradation via AST pathway; L-glutamate and succinate from L-arginine: step 5/5. Its function is as follows. Transforms N(2)-succinylglutamate into succinate and glutamate. The chain is Succinylglutamate desuccinylase from Vibrio cholerae serotype O1 (strain ATCC 39315 / El Tor Inaba N16961).